Consider the following 77-residue polypeptide: Acyl carrier protein (77 aa).

The region spanning 1-76 is the Carrier domain; that stretch reads MATFDDVKAV…DVVNYIDNLK (76 aa). S36 bears the O-(pantetheine 4'-phosphoryl)serine mark.

This sequence belongs to the acyl carrier protein (ACP) family. Post-translationally, 4'-phosphopantetheine is transferred from CoA to a specific serine of apo-ACP by AcpS. This modification is essential for activity because fatty acids are bound in thioester linkage to the sulfhydryl of the prosthetic group.

It localises to the cytoplasm. The protein operates within lipid metabolism; fatty acid biosynthesis. Carrier of the growing fatty acid chain in fatty acid biosynthesis. This chain is Acyl carrier protein, found in Campylobacter jejuni subsp. jejuni serotype O:6 (strain 81116 / NCTC 11828).